The primary structure comprises 111 residues: UPF0060 membrane protein Ajs_1473 (111 aa).

A run of 4 helical transmembrane segments spans residues 8 to 28, 33 to 53, 65 to 85, and 88 to 108; these read ILFAVTAVAEIVGCYLPWLVV, SAWLLLPAAVSLSLFAWLLTL, YGGMYIAVALVWLHVVDGVAL, and WDFVGAAIALAGMSVIALQPA.

It belongs to the UPF0060 family.

It localises to the cell inner membrane. This chain is UPF0060 membrane protein Ajs_1473, found in Acidovorax sp. (strain JS42).